The primary structure comprises 483 residues: UDP-N-acetylmuramate--L-alanine ligase (483 aa).

125–131 (GTHGKTT) contributes to the ATP binding site.

It belongs to the MurCDEF family.

It is found in the cytoplasm. The enzyme catalyses UDP-N-acetyl-alpha-D-muramate + L-alanine + ATP = UDP-N-acetyl-alpha-D-muramoyl-L-alanine + ADP + phosphate + H(+). Its pathway is cell wall biogenesis; peptidoglycan biosynthesis. Cell wall formation. This is UDP-N-acetylmuramate--L-alanine ligase from Pseudoalteromonas translucida (strain TAC 125).